A 173-amino-acid polypeptide reads, in one-letter code: dCTP deaminase, dUMP-forming (173 aa).

Residues 93–98 (RSSTGR), Asp111, 119–121 (TLE), Gln138, and Tyr151 each bind dCTP. Residue Glu121 is the Proton donor/acceptor of the active site.

This sequence belongs to the dCTP deaminase family. In terms of assembly, homotrimer.

It catalyses the reaction dCTP + 2 H2O = dUMP + NH4(+) + diphosphate. Its pathway is pyrimidine metabolism; dUMP biosynthesis; dUMP from dCTP: step 1/1. Functionally, bifunctional enzyme that catalyzes both the deamination of dCTP to dUTP and the hydrolysis of dUTP to dUMP without releasing the toxic dUTP intermediate. This chain is dCTP deaminase, dUMP-forming, found in Clostridium botulinum (strain Eklund 17B / Type B).